Here is a 541-residue protein sequence, read N- to C-terminus: Exopolysaccharide phosphotransferase SCO6021 (541 aa).

The protein belongs to the stealth family.

This chain is Exopolysaccharide phosphotransferase SCO6021, found in Streptomyces coelicolor (strain ATCC BAA-471 / A3(2) / M145).